A 759-amino-acid polypeptide reads, in one-letter code: Xaa-Pro dipeptidyl-peptidase (759 aa).

Active-site charge relay system residues include S347, D467, and H497.

Belongs to the peptidase S15 family. In terms of assembly, homodimer.

It localises to the cytoplasm. It catalyses the reaction Hydrolyzes Xaa-Pro-|- bonds to release unblocked, N-terminal dipeptides from substrates including Ala-Pro-|-p-nitroanilide and (sequentially) Tyr-Pro-|-Phe-Pro-|-Gly-Pro-|-Ile.. Its function is as follows. Removes N-terminal dipeptides sequentially from polypeptides having unsubstituted N-termini provided that the penultimate residue is proline. The chain is Xaa-Pro dipeptidyl-peptidase from Streptococcus gordonii (strain Challis / ATCC 35105 / BCRC 15272 / CH1 / DL1 / V288).